A 399-amino-acid chain; its full sequence is Transcription termination factor 1, mitochondrial (399 aa).

A mitochondrion-targeting transit peptide spans 1–57 (MQSLSLGQTSISKGLNYLTIMAPGNLWHMRNNFLFGSRCWMTRFSAENIFKSVSFRL). Interaction with DNA regions lie at residues 169-170 (RS), 247-251 (QSTKR), 324-331 (AEKKFNDK), 355-358 (SIST), and 384-391 (SKKRYEAK).

The protein belongs to the mTERF family. In terms of assembly, monomer. In terms of processing, phosphoprotein with mostly four phosphate groups. While the DNA-binding activity is unaffected by the phosphorylation state, only the phosphorylated form of the protein is active for termination activity. Functioning seems to be regulated by phosphorylation.

Its subcellular location is the mitochondrion. Transcription termination factor. Binds to a 28 bp region within the tRNA(Leu(uur)) gene at a position immediately adjacent to and downstream of the 16S rRNA gene; this region comprises a tridecamer sequence critical for directing accurate termination. Binds DNA along the major grove and promotes DNA bending and partial unwinding. Promotes base flipping. Transcription termination activity appears to be polarized with highest specificity for transcripts initiated on the light strand. This chain is Transcription termination factor 1, mitochondrial (MTERF1), found in Homo sapiens (Human).